A 204-amino-acid chain; its full sequence is Regulatory protein RecX (204 aa).

Polar residues predominate over residues 1–22; sequence MTKSSRPQSISDSVSVAGSQGT. The disordered stretch occupies residues 1–44; sequence MTKSSRPQSISDSVSVAGSQGTLDDLRARVASVPEAPTREPVDS.

This sequence belongs to the RecX family.

It localises to the cytoplasm. Its function is as follows. Modulates RecA activity. This is Regulatory protein RecX from Mycobacteroides abscessus (strain ATCC 19977 / DSM 44196 / CCUG 20993 / CIP 104536 / JCM 13569 / NCTC 13031 / TMC 1543 / L948) (Mycobacterium abscessus).